We begin with the raw amino-acid sequence, 255 residues long: ATP-dependent L-serine kinase (255 aa).

Glu-36 is a catalytic residue. O-phospho-L-serine is bound at residue Val-74. Asp-75 contacts Mg(2+). Residues Gly-76, His-77, His-78, Trp-108, Lys-234, Thr-236, and His-238 each coordinate O-phospho-L-serine.

Belongs to the SerK family. Mg(2+) serves as cofactor.

The enzyme catalyses L-serine + ATP = O-phospho-L-serine + ADP + H(+). Free serine kinase that uses ATP to phosphorylate L-serine to yield O-phospho-L-serine and ADP. The sequence is that of ATP-dependent L-serine kinase from Desulfurococcus mucosus (strain ATCC 35584 / DSM 2162 / JCM 9187 / O7/1).